The chain runs to 408 residues: Argininosuccinate synthase (408 aa).

ATP-binding positions include Ala9 to Ser17 and Ala36. L-citrulline-binding residues include Tyr87 and Ser92. Position 117 (Gly117) interacts with ATP. L-aspartate contacts are provided by Thr119, Asn123, and Asp124. Asn123 contributes to the L-citrulline binding site. Positions 127, 176, 185, 261, and 273 each coordinate L-citrulline.

Belongs to the argininosuccinate synthase family. Type 1 subfamily. In terms of assembly, homotetramer.

The protein resides in the cytoplasm. It catalyses the reaction L-citrulline + L-aspartate + ATP = 2-(N(omega)-L-arginino)succinate + AMP + diphosphate + H(+). It functions in the pathway amino-acid biosynthesis; L-arginine biosynthesis; L-arginine from L-ornithine and carbamoyl phosphate: step 2/3. The polypeptide is Argininosuccinate synthase (Deinococcus deserti (strain DSM 17065 / CIP 109153 / LMG 22923 / VCD115)).